Consider the following 425-residue polypeptide: Na(+)/H(+) antiporter NhaA 1 (425 aa).

The next 11 membrane-spanning stretches (helical) occupy residues 20 to 40 (AGGVILMAVAVLAMIVANSPL), 65 to 85 (PHLWINDALMAVFFLLVGLEI), 102 to 122 (LPFIAALGGMAAPALVFLAVT), 131 to 151 (GWAIPAATDIAFAIGVMALLG), 160 to 180 (LFLTTVAIVDDMGAVVIIALA), 183 to 203 (ASIKGIALLAAAVILGAMMAM), 218 to 238 (FVLLWFAVLVSGVHATIAGVL), 272 to 292 (FLIVPLFGFANAGISLEGFSL), 303 to 323 (IAAGLFIGKQLGIFSLIWAAV), 342 to 362 (LSVLCGIGFTMSLFIGMLAFA), and 373 to 393 (LGVITGSLLSGVLGYLVLRFA).

Belongs to the NhaA Na(+)/H(+) (TC 2.A.33) antiporter family.

The protein localises to the cell inner membrane. The catalysed reaction is Na(+)(in) + 2 H(+)(out) = Na(+)(out) + 2 H(+)(in). Its function is as follows. Na(+)/H(+) antiporter that extrudes sodium in exchange for external protons. The protein is Na(+)/H(+) antiporter NhaA 1 of Novosphingobium aromaticivorans (strain ATCC 700278 / DSM 12444 / CCUG 56034 / CIP 105152 / NBRC 16084 / F199).